The following is a 61-amino-acid chain: Metallothionein-2A (61 aa).

Methionine 1 is modified (N-acetylmethionine). The segment at 1–29 (MDPNCSCAAGGSCTCAGSCKCKDCKCTSC) is beta. Residues cysteine 5, cysteine 7, cysteine 13, cysteine 15, cysteine 19, cysteine 21, cysteine 24, cysteine 26, cysteine 29, cysteine 33, cysteine 34, cysteine 36, cysteine 37, cysteine 41, cysteine 44, cysteine 48, cysteine 50, and cysteine 57 each contribute to the a divalent metal cation site. The tract at residues 30 to 61 (KKSCCSCCPVGCAKCAQGCICKGASDKCSCCA) is alpha. Serine 58 carries the phosphoserine modification. The a divalent metal cation site is built by cysteine 59 and cysteine 60.

Belongs to the metallothionein superfamily. Type 1 family. In terms of assembly, interacts with EOLA1.

In terms of biological role, metallothioneins have a high content of cysteine residues that bind various heavy metals; these proteins are transcriptionally regulated by both heavy metals and glucocorticoids. This is Metallothionein-2A (MT2A) from Sus scrofa (Pig).